Consider the following 79-residue polypeptide: Spidroin-1 (79 aa).

It belongs to the silk fibroin family. As to quaternary structure, major subunit, with spidroin 2, of the dragline silk.

It is found in the secreted. It localises to the extracellular space. In terms of biological role, spiders' major ampullate silk possesses unique characteristics of strength and elasticity. Fibroin consists of pseudocrystalline regions of antiparallel beta-sheet interspersed with elastic amorphous segments. The polypeptide is Spidroin-1 (Araneus bicentenarius (Giant lichen orbweaver)).